We begin with the raw amino-acid sequence, 100 residues long: Urease subunit gamma (100 aa).

The protein belongs to the urease gamma subunit family. Heterotrimer of UreA (gamma), UreB (beta) and UreC (alpha) subunits. Three heterotrimers associate to form the active enzyme.

Its subcellular location is the cytoplasm. The catalysed reaction is urea + 2 H2O + H(+) = hydrogencarbonate + 2 NH4(+). Its pathway is nitrogen metabolism; urea degradation; CO(2) and NH(3) from urea (urease route): step 1/1. The protein is Urease subunit gamma of Staphylococcus aureus (strain N315).